The primary structure comprises 342 residues: Sideroflexin-5 (342 aa).

A compositionally biased stretch (low complexity) spans 1 to 24; that stretch reads MADTATTASAASAAASASNASSDA. The disordered stretch occupies residues 1-29; the sequence is MADTATTASAASAAASASNASSDAPPFQL. The next 4 membrane-spanning stretches (helical) occupy residues 105–125, 165–185, 256–276, and 289–309; these read IFMPFRMSGYIPFGTPIVVGL, FIQGYLGAVISAVSIAVGLNV, LTRVVLPMPILVLPPIVMSML, and LLPVHSLVCLAAFGLALPLAI.

Belongs to the sideroflexin family. Specifically expressed in the brain.

It localises to the mitochondrion inner membrane. The enzyme catalyses citrate(in) = citrate(out). Mitochondrial amino-acid transporter. Transports citrate. Does not act as a serine transporter: not able to mediate transport of serine into mitochondria. In brown adipose tissue, plays a role in the regulation of UCP1-dependent thermogenesis probably by supporting mitochondrial glycerol-3-phosphate utilization. This Rattus norvegicus (Rat) protein is Sideroflexin-5.